Consider the following 300-residue polypeptide: Porphobilinogen deaminase (300 aa).

Cys-239 carries the S-(dipyrrolylmethanemethyl)cysteine modification.

This sequence belongs to the HMBS family. Monomer. Dipyrromethane serves as cofactor.

It carries out the reaction 4 porphobilinogen + H2O = hydroxymethylbilane + 4 NH4(+). It functions in the pathway porphyrin-containing compound metabolism; protoporphyrin-IX biosynthesis; coproporphyrinogen-III from 5-aminolevulinate: step 2/4. Tetrapolymerization of the monopyrrole PBG into the hydroxymethylbilane pre-uroporphyrinogen in several discrete steps. This Francisella philomiragia subsp. philomiragia (strain ATCC 25017 / CCUG 19701 / FSC 153 / O#319-036) protein is Porphobilinogen deaminase.